A 360-amino-acid chain; its full sequence is Peptide chain release factor 1 (360 aa).

Glutamine 235 bears the N5-methylglutamine mark. Basic and acidic residues predominate over residues 285 to 295; the sequence is RQAAEQTDMRR. Residues 285 to 309 form a disordered region; the sequence is RQAAEQTDMRRNLLGSGDRSDKIRT.

It belongs to the prokaryotic/mitochondrial release factor family. Methylated by PrmC. Methylation increases the termination efficiency of RF1.

It is found in the cytoplasm. Peptide chain release factor 1 directs the termination of translation in response to the peptide chain termination codons UAG and UAA. In Haemophilus influenzae (strain 86-028NP), this protein is Peptide chain release factor 1.